A 425-amino-acid chain; its full sequence is GTPase Obg (425 aa).

The Obg domain occupies 1–158 (MFIDKAKIYV…REIILELKLL (158 aa)). Residues 159–331 (ADVGLVGFPN…LMAEVSKTLA (173 aa)) enclose the OBG-type G domain. GTP contacts are provided by residues 165-172 (GFPNVGKS), 190-194 (FTTLK), 212-215 (DIPG), 282-285 (NKSD), and 312-314 (SAA). Residues Ser172 and Thr192 each coordinate Mg(2+). The OCT domain maps to 345-425 (LFIPEEKRFT…LNDFEFEFVI (81 aa)).

This sequence belongs to the TRAFAC class OBG-HflX-like GTPase superfamily. OBG GTPase family. In terms of assembly, monomer. The cofactor is Mg(2+).

It localises to the cytoplasm. An essential GTPase which binds GTP, GDP and possibly (p)ppGpp with moderate affinity, with high nucleotide exchange rates and a fairly low GTP hydrolysis rate. Plays a role in control of the cell cycle, stress response, ribosome biogenesis and in those bacteria that undergo differentiation, in morphogenesis control. The protein is GTPase Obg of Clostridium tetani (strain Massachusetts / E88).